The following is a 208-amino-acid chain: Ribonuclease HII (208 aa).

In terms of domain architecture, RNase H type-2 spans 13 to 202 (DLVAGVDEVG…VRQAYEAREA (190 aa)). A divalent metal cation contacts are provided by Asp-19, Glu-20, and Asp-111.

This sequence belongs to the RNase HII family. Mn(2+) is required as a cofactor. Requires Mg(2+) as cofactor.

The protein localises to the cytoplasm. It catalyses the reaction Endonucleolytic cleavage to 5'-phosphomonoester.. Endonuclease that specifically degrades the RNA of RNA-DNA hybrids. The chain is Ribonuclease HII from Pseudomonas fluorescens (strain ATCC BAA-477 / NRRL B-23932 / Pf-5).